Consider the following 221-residue polypeptide: Lipoprotein-releasing system ATP-binding protein LolD (221 aa).

Positions 6-220 constitute an ABC transporter domain; that stretch reads LILKKISKHY…YNLKNGLLNI (215 aa). Residue 42–49 participates in ATP binding; it reads GSSGSGKS.

It belongs to the ABC transporter superfamily. Lipoprotein translocase (TC 3.A.1.125) family. As to quaternary structure, the complex is composed of two ATP-binding proteins (LolD) and two transmembrane proteins (LolC and LolE).

Its subcellular location is the cell inner membrane. In terms of biological role, part of the ABC transporter complex LolCDE involved in the translocation of mature outer membrane-directed lipoproteins, from the inner membrane to the periplasmic chaperone, LolA. Responsible for the formation of the LolA-lipoprotein complex in an ATP-dependent manner. In Rickettsia typhi (strain ATCC VR-144 / Wilmington), this protein is Lipoprotein-releasing system ATP-binding protein LolD.